A 246-amino-acid chain; its full sequence is Probable site-specific recombinase in afa region (246 aa).

One can recognise a Tyr recombinase domain in the interval 40 to 225 (ATPAYLLAPE…FALDMAATLA (186 aa)). Residues Arg75, Lys102, His177, Arg180, and His203 contribute to the active site. Tyr212 functions as the O-(3'-phospho-DNA)-tyrosine intermediate in the catalytic mechanism.

Belongs to the 'phage' integrase family.

This chain is Probable site-specific recombinase in afa region (int), found in Escherichia coli.